Consider the following 815-residue polypeptide: G-type lectin S-receptor-like serine/threonine-protein kinase SD1-1 (815 aa).

An N-terminal signal peptide occupies residues 1-22 (MREIHSLFSLSLFLISSSLSVA). The Extracellular portion of the chain corresponds to 23–438 (LDYNVITPKE…FAKIEFKGRE (416 aa)). Residues 25–152 (YNVITPKEFL…EEAVLWQSFD (128 aa)) enclose the Bulb-type lectin domain. Asn93, Asn249, and Asn265 each carry an N-linked (GlcNAc...) asparagine glycan. Residues 288-326 (PEDECDYYSICGAYAVCGINSKNTPSCSCLQGFKPKSGR) form the EGF-like domain. 2 disulfides stabilise this stretch: Cys292–Cys304 and Cys298–Cys314. Residues Asn329 and Asn385 are each glycosylated (N-linked (GlcNAc...) asparagine). The 84-residue stretch at 345 to 428 (CEKKDAFVKF…FGQDVYIRMG (84 aa)) folds into the PAN domain. 2 disulfide bridges follow: Cys378/Cys403 and Cys382/Cys388. A helical membrane pass occupies residues 439–459 (VVGMVVGSVVAIAVVLVVVFA). Over 460 to 815 (CFRKKIMKRY…EVSITMLQGR (356 aa)) the chain is Cytoplasmic. In terms of domain architecture, Protein kinase spans 500-783 (FSYVNFLGRG…SDSSLPHPTQ (284 aa)). Residues 506–514 (LGRGGFGPV) and Lys528 each bind ATP. Ser534 carries the phosphoserine modification. Residues 589–606 (RRSTELDWKKRMNIINGV) form a caM-binding region. Asp625 (proton acceptor) is an active-site residue. Phosphoserine is present on Ser642. Thr659 is subject to Phosphothreonine. Phosphoserine occurs at positions 797 and 803. Thr810 is subject to Phosphothreonine.

This sequence belongs to the protein kinase superfamily. Ser/Thr protein kinase family. Interacts with PUB9, PUB13 and PUB14.

The protein localises to the cell membrane. It catalyses the reaction L-seryl-[protein] + ATP = O-phospho-L-seryl-[protein] + ADP + H(+). The enzyme catalyses L-threonyl-[protein] + ATP = O-phospho-L-threonyl-[protein] + ADP + H(+). The sequence is that of G-type lectin S-receptor-like serine/threonine-protein kinase SD1-1 (SD11) from Arabidopsis thaliana (Mouse-ear cress).